Here is a 120-residue protein sequence, read N- to C-terminus: uncharacterized protein (120 aa).

Transmembrane regions (helical) follow at residues 24 to 44 (ALLGYRIMAWTTGLWLIALCY), 61 to 81 (IGVVHGWVYFTYLLLTLNLAV), and 86 to 106 (PLGKTAGVLLAGTIPLLGIVV).

To M.leprae ML1176.

It localises to the cell membrane. This is an uncharacterized protein from Mycobacterium bovis (strain ATCC BAA-935 / AF2122/97).